Here is a 567-residue protein sequence, read N- to C-terminus: 2-succinyl-5-enolpyruvyl-6-hydroxy-3-cyclohexene-1-carboxylate synthase (567 aa).

It belongs to the TPP enzyme family. MenD subfamily. In terms of assembly, homodimer. The cofactor is Mg(2+). Mn(2+) is required as a cofactor. Thiamine diphosphate serves as cofactor.

It carries out the reaction isochorismate + 2-oxoglutarate + H(+) = 5-enolpyruvoyl-6-hydroxy-2-succinyl-cyclohex-3-ene-1-carboxylate + CO2. The protein operates within quinol/quinone metabolism; 1,4-dihydroxy-2-naphthoate biosynthesis; 1,4-dihydroxy-2-naphthoate from chorismate: step 2/7. It functions in the pathway quinol/quinone metabolism; menaquinone biosynthesis. In terms of biological role, catalyzes the thiamine diphosphate-dependent decarboxylation of 2-oxoglutarate and the subsequent addition of the resulting succinic semialdehyde-thiamine pyrophosphate anion to isochorismate to yield 2-succinyl-5-enolpyruvyl-6-hydroxy-3-cyclohexene-1-carboxylate (SEPHCHC). The polypeptide is 2-succinyl-5-enolpyruvyl-6-hydroxy-3-cyclohexene-1-carboxylate synthase (Yersinia pestis bv. Antiqua (strain Angola)).